A 505-amino-acid chain; its full sequence is Histidine ammonia-lyase (505 aa).

The 5-imidazolinone (Ala-Gly) cross-link spans 141 to 143 (ASG). Ser-142 carries the post-translational modification 2,3-didehydroalanine (Ser).

This sequence belongs to the PAL/histidase family. In terms of processing, contains an active site 4-methylidene-imidazol-5-one (MIO), which is formed autocatalytically by cyclization and dehydration of residues Ala-Ser-Gly.

It is found in the cytoplasm. The enzyme catalyses L-histidine = trans-urocanate + NH4(+). Its pathway is amino-acid degradation; L-histidine degradation into L-glutamate; N-formimidoyl-L-glutamate from L-histidine: step 1/3. The polypeptide is Histidine ammonia-lyase (Bacillus cereus (strain 03BB102)).